The following is a 156-amino-acid chain: SsrA-binding protein (156 aa).

It belongs to the SmpB family.

It localises to the cytoplasm. Functionally, required for rescue of stalled ribosomes mediated by trans-translation. Binds to transfer-messenger RNA (tmRNA), required for stable association of tmRNA with ribosomes. tmRNA and SmpB together mimic tRNA shape, replacing the anticodon stem-loop with SmpB. tmRNA is encoded by the ssrA gene; the 2 termini fold to resemble tRNA(Ala) and it encodes a 'tag peptide', a short internal open reading frame. During trans-translation Ala-aminoacylated tmRNA acts like a tRNA, entering the A-site of stalled ribosomes, displacing the stalled mRNA. The ribosome then switches to translate the ORF on the tmRNA; the nascent peptide is terminated with the 'tag peptide' encoded by the tmRNA and targeted for degradation. The ribosome is freed to recommence translation, which seems to be the essential function of trans-translation. This chain is SsrA-binding protein, found in Thermoanaerobacter pseudethanolicus (strain ATCC 33223 / 39E) (Clostridium thermohydrosulfuricum).